The primary structure comprises 1531 residues: Probable outer membrane protein PmpD (1531 aa).

A signal peptide spans M1–A20. In terms of domain architecture, Autotransporter spans E1244–F1531.

Belongs to the PMP outer membrane protein family.

Its subcellular location is the secreted. It is found in the cell wall. The protein resides in the cell outer membrane. The chain is Probable outer membrane protein PmpD (pmpD) from Chlamydia trachomatis serovar D (strain ATCC VR-885 / DSM 19411 / UW-3/Cx).